We begin with the raw amino-acid sequence, 200 residues long: Holliday junction branch migration complex subunit RuvA (200 aa).

Positions 1–65 (MYEYIKGTLT…ETEHVLYGFS (65 aa)) are domain I. Positions 66–144 (SRAEKECFRL…TLMPLYLEEP (79 aa)) are domain II. A flexible linker region spans residues 145-149 (VVPSS). Residues 150–200 (TANSSFKEGIGALMNLGFSRLAADRMMTEAVKELSEEASVAELLPIALRKS) are domain III.

The protein belongs to the RuvA family. In terms of assembly, homotetramer. Forms an RuvA(8)-RuvB(12)-Holliday junction (HJ) complex. HJ DNA is sandwiched between 2 RuvA tetramers; dsDNA enters through RuvA and exits via RuvB. An RuvB hexamer assembles on each DNA strand where it exits the tetramer. Each RuvB hexamer is contacted by two RuvA subunits (via domain III) on 2 adjacent RuvB subunits; this complex drives branch migration. In the full resolvosome a probable DNA-RuvA(4)-RuvB(12)-RuvC(2) complex forms which resolves the HJ.

It is found in the cytoplasm. The RuvA-RuvB-RuvC complex processes Holliday junction (HJ) DNA during genetic recombination and DNA repair, while the RuvA-RuvB complex plays an important role in the rescue of blocked DNA replication forks via replication fork reversal (RFR). RuvA specifically binds to HJ cruciform DNA, conferring on it an open structure. The RuvB hexamer acts as an ATP-dependent pump, pulling dsDNA into and through the RuvAB complex. HJ branch migration allows RuvC to scan DNA until it finds its consensus sequence, where it cleaves and resolves the cruciform DNA. This is Holliday junction branch migration complex subunit RuvA from Chlamydia trachomatis serovar A (strain ATCC VR-571B / DSM 19440 / HAR-13).